Reading from the N-terminus, the 130-residue chain is Protein ApaG (130 aa).

Residues 3–127 (RALTRDIEVT…FSLDTPDLRR (125 aa)) form the ApaG domain.

This is Protein ApaG from Allorhizobium ampelinum (strain ATCC BAA-846 / DSM 112012 / S4) (Agrobacterium vitis (strain S4)).